A 394-amino-acid chain; its full sequence is Metal tolerance protein 11 (394 aa).

At 1 to 103 (MVEPASPDSD…EQDNLAKSET (103 aa)) the chain is on the cytoplasmic side. The chain crosses the membrane as a helical span at residues 104 to 124 (LAIRISNIANMLLFAAKVYAS). The Vacuolar segment spans residues 125–130 (VTSGSL). Residues 131 to 151 (AIIASTLDSLLDLLSGFILWF) form a helical membrane-spanning segment. Over 152-172 (TAFSMQTPNPYQYPIGKKRMQ) the chain is Cytoplasmic. A helical transmembrane segment spans residues 173-193 (PLGILVFASVMATLGLQIILE). Residues 194-212 (SLRTMLSSHKEFNLTKEQE) lie on the Vacuolar side of the membrane. The helical transmembrane segment at 213–233 (SWVVGIMLSVTLVKLLLVLYC) threads the bilayer. The Cytoplasmic portion of the chain corresponds to 234-251 (RSFTNEIVKAYAQDHFFD). The helical transmembrane segment at 252 to 272 (VITNIIGLIAVILANYIDYWI) threads the bilayer. Residue Asp-273 is a topological domain, vacuolar. The chain crosses the membrane as a helical span at residues 274 to 294 (PVGAIILALYTIRTWSMTVLE). The Cytoplasmic portion of the chain corresponds to 295–394 (NVNSLVGKSA…HKPEHARSHC (100 aa)).

It belongs to the cation diffusion facilitator (CDF) transporter (TC 2.A.4) family. SLC30A subfamily. As to expression, widely expressed.

Its subcellular location is the prevacuolar compartment membrane. The protein resides in the golgi apparatus membrane. Functionally, cation/proton antiporter involved in endogenous manganese tolerance probably through vesicular trafficking and exocytosis. In Arabidopsis thaliana (Mouse-ear cress), this protein is Metal tolerance protein 11 (MTP11).